Reading from the N-terminus, the 228-residue chain is Putative adhesin RBE_1271 (228 aa).

The first 22 residues, 1–22 (MKKLLLIAATSATVLSSALSFA), serve as a signal peptide directing secretion.

In Rickettsia bellii (strain RML369-C), this protein is Putative adhesin RBE_1271.